The sequence spans 235 residues: Sugar fermentation stimulation protein homolog (235 aa).

Belongs to the SfsA family.

This is Sugar fermentation stimulation protein homolog from Ectopseudomonas mendocina (strain ymp) (Pseudomonas mendocina).